The sequence spans 116 residues: Transmembrane protein 213 (116 aa).

The signal sequence occupies residues 1–35 (MAQSGVFLRNPGHLTSAPQAALLFSLVLTSFHLSC). The Extracellular portion of the chain corresponds to 36-79 (GTETSSSNSTLSAHHPDPGTLEQCANVDFCPLASLCCRASVDEY). Residues 80–100 (GWIAAAVGWSFWFLTLILLCV) traverse the membrane as a helical segment. At 101–116 (DKLMKLTPEEPKDLAA) the chain is on the cytoplasmic side.

Its subcellular location is the membrane. This chain is Transmembrane protein 213 (Tmem213), found in Mus musculus (Mouse).